A 96-amino-acid chain; its full sequence is DNA-directed RNA polymerase subunit Rpo11 (96 aa).

This sequence belongs to the archaeal Rpo11/eukaryotic RPB11/RPC19 RNA polymerase subunit family. In terms of assembly, part of the RNA polymerase complex.

The protein resides in the cytoplasm. It carries out the reaction RNA(n) + a ribonucleoside 5'-triphosphate = RNA(n+1) + diphosphate. Functionally, DNA-dependent RNA polymerase (RNAP) catalyzes the transcription of DNA into RNA using the four ribonucleoside triphosphates as substrates. The sequence is that of DNA-directed RNA polymerase subunit Rpo11 from Haloquadratum walsbyi (strain DSM 16790 / HBSQ001).